The sequence spans 203 residues: Vexin (203 aa).

Residues 59 to 70 (HRTDRRDGEGRW) are compositionally biased toward basic and acidic residues. The interval 59–101 (HRTDRRDGEGRWSGRFQNPRLQGPHPAKTPARPVGTSEPKSAN) is disordered.

It belongs to the vexin family.

It is found in the cell membrane. It localises to the nucleus. In terms of biological role, required for neurogenesis in the neural plate and retina. Strongly cooperates with neural bHLH factors to promote neurogenesis. The chain is Vexin from Bos taurus (Bovine).